The primary structure comprises 203 residues: Peptide deformylase (203 aa).

Residues cysteine 130 and histidine 173 each coordinate Fe cation. The active site involves glutamate 174. Residue histidine 177 participates in Fe cation binding.

It belongs to the polypeptide deformylase family. The cofactor is Fe(2+).

The catalysed reaction is N-terminal N-formyl-L-methionyl-[peptide] + H2O = N-terminal L-methionyl-[peptide] + formate. In terms of biological role, removes the formyl group from the N-terminal Met of newly synthesized proteins. Requires at least a dipeptide for an efficient rate of reaction. N-terminal L-methionine is a prerequisite for activity but the enzyme has broad specificity at other positions. This Streptococcus pneumoniae serotype 2 (strain D39 / NCTC 7466) protein is Peptide deformylase.